Here is a 346-residue protein sequence, read N- to C-terminus: Protease inhibitor Egf1.5b (346 aa).

The signal sequence occupies residues 1-28 (MYIDTGIMSNNIFLFAFFALVGLTRIEA). In terms of domain architecture, TIL spans 52–104 (CRENEHYNSTRIECEDECNDRNNKLCYRFQQFCWCNEGYIRNSSHICVKLEDC).

The protein belongs to the polydnaviridae EGF-like motif protein family. As to quaternary structure, interacts with host PAP1, PAP3 and SPH2.

Its function is as follows. Counteracts the host humoral immune response by inhibiting the processing and the amidolytic activity of host PAP1 and PAP3. Thereby, melanization of host hemolymph, normally producing several reactive intermediates toxic for viruses, is deregulated and proper immune response cannot occur. This Microplitis demolitor (Parasitoid wasp) protein is Protease inhibitor Egf1.5b (O5).